The primary structure comprises 235 residues: Ubiquinone/menaquinone biosynthesis C-methyltransferase UbiE (235 aa).

Residues Thr60 and Asp81 each coordinate S-adenosyl-L-methionine.

Belongs to the class I-like SAM-binding methyltransferase superfamily. MenG/UbiE family.

The catalysed reaction is a 2-demethylmenaquinol + S-adenosyl-L-methionine = a menaquinol + S-adenosyl-L-homocysteine + H(+). It catalyses the reaction a 2-methoxy-6-(all-trans-polyprenyl)benzene-1,4-diol + S-adenosyl-L-methionine = a 5-methoxy-2-methyl-3-(all-trans-polyprenyl)benzene-1,4-diol + S-adenosyl-L-homocysteine + H(+). It participates in quinol/quinone metabolism; menaquinone biosynthesis; menaquinol from 1,4-dihydroxy-2-naphthoate: step 2/2. Its pathway is cofactor biosynthesis; ubiquinone biosynthesis. In terms of biological role, methyltransferase required for the conversion of demethylmenaquinol (DMKH2) to menaquinol (MKH2) and the conversion of 2-polyprenyl-6-methoxy-1,4-benzoquinol (DDMQH2) to 2-polyprenyl-3-methyl-6-methoxy-1,4-benzoquinol (DMQH2). The sequence is that of Ubiquinone/menaquinone biosynthesis C-methyltransferase UbiE from Geotalea uraniireducens (strain Rf4) (Geobacter uraniireducens).